The primary structure comprises 121 residues: uncharacterized protein (121 aa).

Disordered stretches follow at residues 1–41 and 94–121; these read MRRQ…QESR and GGTI…GLRR. Positions 98–108 are enriched in polar residues; sequence SGQQSRNSSLP.

Predominantly expressed in tissues containing motile cilia. Also expressed in non-motile ciliated adult olfactory bulbs.

Its subcellular location is the cytoplasm. It localises to the cytoskeleton. It is found in the cilium basal body. This is an uncharacterized protein from Mus musculus (Mouse).